We begin with the raw amino-acid sequence, 524 residues long: Ankyrin repeat-containing protein At5g02620 (524 aa).

ANK repeat units lie at residues 16–45, 55–84, 90–119, 124–153, 158–187, 192–222, 226–255, and 260–289; these read RDDTPLHTAVREGKTDLLLEMIGEHDGVEL, SGETALYVAAEYGYTDMVKILMKHSDSVLA, NGFDAFHIAAKNGNLQVLDVLIEANPELSF, SKTTALHTAASQGHGEIVCFLLDKGVDLAA, NGKTALHSAARNGHTVIVKKLIEKKAGMVT, KGQTALHMAVKGQNTEIVDVLMEADGSLINS, KGNTPLHIAVRKNRAEIVQTVLKYCEVSRV, and SGETALDIAEKTGLHEIVPLLQKIGMQNAR. Helical transmembrane passes span 349–369, 399–419, 441–461, and 472–492; these read AINSTTLVAILIATVAFAAIF, FLIFVVFDSFALFISLAVVVV, LMWMACIMISVAFVSLSFVVV, and VTAIGALIMVSTLGTMCYWVI. The residue at position 508 (Ser-508) is a Phosphoserine.

The protein resides in the membrane. The protein is Ankyrin repeat-containing protein At5g02620 of Arabidopsis thaliana (Mouse-ear cress).